The following is a 519-amino-acid chain: Zinc finger and BTB domain-containing protein 18.3 (519 aa).

A BTB domain is found at 24-91; that stretch reads CDCTVLVGDA…MYEGKLQFKD (68 aa). Positions 189 to 227 are disordered; it reads ASIPQTGGEVDTHTTAAGKTADSPCSSTGSLSHRSATSM. Polar residues predominate over residues 201 to 227; the sequence is HTTAAGKTADSPCSSTGSLSHRSATSM. 4 consecutive C2H2-type zinc fingers follow at residues 367–389, 407–429, 435–457, and 463–486; these read FMCP…LSTH, PTCS…ERTH, FTCT…AVVH, and HACK…RKFH.

The protein belongs to the krueppel C2H2-type zinc-finger protein family. ZBTB18 subfamily.

The protein localises to the nucleus. In terms of biological role, transcriptional repressor that plays a role in various developmental processes. Specifically binds the consensus DNA sequence 5'-[AC]ACATCTG[GT][AC]-3' which contains the E box core, and acts by recruiting chromatin remodeling multiprotein complexes. This is Zinc finger and BTB domain-containing protein 18.3 (zbtb18.3) from Xenopus laevis (African clawed frog).